Consider the following 284-residue polypeptide: NAD kinase (284 aa).

Residue Asp-67 is the Proton acceptor of the active site. Residues 67 to 68 (DG), 141 to 142 (ND), Arg-152, Lys-169, Asp-171, 182 to 187 (TGYSLS), and Gln-241 contribute to the NAD(+) site.

Belongs to the NAD kinase family. A divalent metal cation serves as cofactor.

It localises to the cytoplasm. It catalyses the reaction NAD(+) + ATP = ADP + NADP(+) + H(+). Functionally, involved in the regulation of the intracellular balance of NAD and NADP, and is a key enzyme in the biosynthesis of NADP. Catalyzes specifically the phosphorylation on 2'-hydroxyl of the adenosine moiety of NAD to yield NADP. The chain is NAD kinase from Geobacter sulfurreducens (strain ATCC 51573 / DSM 12127 / PCA).